A 334-amino-acid chain; its full sequence is Ketol-acid reductoisomerase (NADP(+)) (334 aa).

The 181-residue stretch at 1-181 (MTTVYYDQDV…GATRAGVIET (181 aa)) folds into the KARI N-terminal Rossmann domain. NADP(+)-binding positions include 25 to 28 (YGSQ), Arg48, Ser52, and 82 to 85 (DEIQ). His107 is a catalytic residue. Gly133 contributes to the NADP(+) binding site. Residues 182–327 (TFKEETETDL…RELREMMPFI (146 aa)) enclose the KARI C-terminal knotted domain. Positions 190, 194, 226, and 230 each coordinate Mg(2+). A substrate-binding site is contributed by Ser251.

This sequence belongs to the ketol-acid reductoisomerase family. Mg(2+) serves as cofactor.

The enzyme catalyses (2R)-2,3-dihydroxy-3-methylbutanoate + NADP(+) = (2S)-2-acetolactate + NADPH + H(+). It carries out the reaction (2R,3R)-2,3-dihydroxy-3-methylpentanoate + NADP(+) = (S)-2-ethyl-2-hydroxy-3-oxobutanoate + NADPH + H(+). Its pathway is amino-acid biosynthesis; L-isoleucine biosynthesis; L-isoleucine from 2-oxobutanoate: step 2/4. It functions in the pathway amino-acid biosynthesis; L-valine biosynthesis; L-valine from pyruvate: step 2/4. Functionally, involved in the biosynthesis of branched-chain amino acids (BCAA). Catalyzes an alkyl-migration followed by a ketol-acid reduction of (S)-2-acetolactate (S2AL) to yield (R)-2,3-dihydroxy-isovalerate. In the isomerase reaction, S2AL is rearranged via a Mg-dependent methyl migration to produce 3-hydroxy-3-methyl-2-ketobutyrate (HMKB). In the reductase reaction, this 2-ketoacid undergoes a metal-dependent reduction by NADPH to yield (R)-2,3-dihydroxy-isovalerate. The chain is Ketol-acid reductoisomerase (NADP(+)) from Staphylococcus aureus (strain Mu3 / ATCC 700698).